A 489-amino-acid chain; its full sequence is Inositol-pentakisphosphate 2-kinase (489 aa).

The short motif at 136-140 (EIKPK) is the EXKPK motif element.

Belongs to the IPK1 type 2 family. As to expression, in brain, it is expressed throughout the hippocampus (CA1, CA2, CA3 and dentate gyrus), inner layers of the cerebral cortex, and Purkinje cells of the cerebellum. In heart, it is expressed in cardiomyocytes but not in interstitial cells, blood vessels, or valves. Also expressed in testis.

The protein localises to the cytoplasm. Its subcellular location is the nucleus. The enzyme catalyses 1D-myo-inositol 1,3,4,5,6-pentakisphosphate + ATP = 1D-myo-inositol hexakisphosphate + ADP + H(+). In terms of biological role, phosphorylates Ins(1,3,4,5,6)P5 at position 2 to form Ins(1,2,3,4,5,6)P6 (InsP6 or phytate). InsP6 is involved in many processes such as mRNA export, non-homologous end-joining, endocytosis, ion channel regulation. It also protects cells from TNF-alpha-induced apoptosis. This chain is Inositol-pentakisphosphate 2-kinase (Ippk), found in Mus musculus (Mouse).